The following is a 163-amino-acid chain: Endoribonuclease YbeY (163 aa).

Residues His-129, His-133, and His-139 each contribute to the Zn(2+) site.

This sequence belongs to the endoribonuclease YbeY family. Zn(2+) serves as cofactor.

Its subcellular location is the cytoplasm. Single strand-specific metallo-endoribonuclease involved in late-stage 70S ribosome quality control and in maturation of the 3' terminus of the 16S rRNA. This chain is Endoribonuclease YbeY, found in Picosynechococcus sp. (strain ATCC 27264 / PCC 7002 / PR-6) (Agmenellum quadruplicatum).